The sequence spans 627 residues: Pescadillo homolog (627 aa).

The BRCT domain maps to 321 to 414; sequence RLRTLFKGLK…QLLPTNKYFI (94 aa). Disordered regions lie at residues 450 to 469, 488 to 566, and 595 to 627; these read HAQS…ETVD, YKKY…MVKP, and TIEA…KLGK. Phosphoserine occurs at positions 453 and 457. 2 stretches are compositionally biased toward acidic residues: residues 454–469 and 497–521; these read DDDS…ETVD and VNED…EELD. The segment covering 522–533 has biased composition (basic and acidic residues); it reads EKTKRLQEEKQK. A compositionally biased stretch (basic residues) spans 540-549; it reads KVHKVNKRQV. Basic and acidic residues-rich tracts occupy residues 550–559 and 595–615; these read HKAEVDEHRL and TIEA…RKEA. Positions 582-625 form a coiled coil; it reads KEKEEWLLRKKRRTIEASEKEARKTAKREARKEAAAAAAKASKL. Residues 616 to 627 are compositionally biased toward low complexity; it reads AAAAAKASKLGK.

Belongs to the pescadillo family.

Its subcellular location is the nucleus. The protein resides in the nucleolus. It localises to the nucleoplasm. In terms of biological role, required for maturation of ribosomal RNAs and formation of the large ribosomal subunit. The chain is Pescadillo homolog from Drosophila simulans (Fruit fly).